Here is a 317-residue protein sequence, read N- to C-terminus: Toluene-4-sulfonate monooxygenase system reductase subunit TsaB1 (317 aa).

Positions 2–108 (SADVPVTVAA…RATCSEMAPE (107 aa)) constitute an FAD-binding FR-type domain. 110–220 (RRVLLLAGGI…PGSVRMERFK (111 aa)) is a binding site for NAD(+). In terms of domain architecture, 2Fe-2S ferredoxin-type spans 230 to 317 (QPFELVLQRA…CGGGRLVLDI (88 aa)). [2Fe-2S] cluster is bound by residues C266, C271, C274, and C304.

In terms of assembly, monomer. Part of the p-toluenesulfonate methyl-monooxygenase complex TsaBM, comprising the reductase TsaB and the oxygenase TsaM. The cofactor is FMN.

In terms of biological role, iron-sulfur flavoprotein carrying electrons from NADH to the oxygenase TsaM. Involved in the toluene-4-sulfonate degradation pathway. This Comamonas testosteroni (Pseudomonas testosteroni) protein is Toluene-4-sulfonate monooxygenase system reductase subunit TsaB1 (tsaB1).